Reading from the N-terminus, the 122-residue chain is High-potential iron-sulfur protein (122 aa).

Residues 1-37 form the signal peptide; that stretch reads MSDKPISKSRRDAVKVMLGTAAAIPMINLVGFGTARA. Positions 80, 83, 100, and 114 each coordinate [4Fe-4S] cluster.

Belongs to the high-potential iron-sulfur protein (HiPIP) family. Homodimer.

It localises to the periplasm. Its function is as follows. Specific class of high-redox-potential 4Fe-4S ferredoxins. Functions in anaerobic electron transport in most purple and in some other photosynthetic bacteria and in at least one genus (Paracoccus) of halophilic, denitrifying bacteria. This Allochromatium vinosum (strain ATCC 17899 / DSM 180 / NBRC 103801 / NCIMB 10441 / D) (Chromatium vinosum) protein is High-potential iron-sulfur protein (hip).